A 257-amino-acid polypeptide reads, in one-letter code: Phosphonates import ATP-binding protein PhnC 1 (257 aa).

One can recognise an ABC transporter domain in the interval 2–246 (IELKNVSKVY…VFKDIYGRPL (245 aa)). Position 35–42 (35–42 (GLSGAGKS)) interacts with ATP.

Belongs to the ABC transporter superfamily. Phosphonates importer (TC 3.A.1.9.1) family. In terms of assembly, the complex is composed of two ATP-binding proteins (PhnC), two transmembrane proteins (PhnE) and a solute-binding protein (PhnD).

The protein resides in the cell membrane. The enzyme catalyses phosphonate(out) + ATP + H2O = phosphonate(in) + ADP + phosphate + H(+). Part of the ABC transporter complex PhnCDE involved in phosphonates import. Responsible for energy coupling to the transport system. The polypeptide is Phosphonates import ATP-binding protein PhnC 1 (Halalkalibacterium halodurans (strain ATCC BAA-125 / DSM 18197 / FERM 7344 / JCM 9153 / C-125) (Bacillus halodurans)).